Reading from the N-terminus, the 589-residue chain is Pentalenolactone D synthase (589 aa).

Residues 60–61, 82–83, 90–91, 102–103, Y108, V152, and M491 each bind FAD; these read IG, DE, TW, and DV.

It belongs to the FAD-binding monooxygenase family. FAD serves as cofactor.

The catalysed reaction is 1-deoxy-11-oxopentalenate + NADPH + O2 + H(+) = pentalenolactone D + NADP(+) + H2O. The protein operates within antibiotic biosynthesis; pentalenolactone biosynthesis. Catalyzes the flavin-dependent Baeyer-Villiger oxidation of 1-deoxy-11-oxopentalenic acid to pentalenolactone D in the biosynthesis of pentalenolactone antibiotic. The polypeptide is Pentalenolactone D synthase (pntE) (Streptomyces arenae).